We begin with the raw amino-acid sequence, 251 residues long: Mediator of RNA polymerase II transcription subunit 7 (251 aa).

Residues 1 to 38 are disordered; the sequence is MLPGFGAQTVSPFPNPPEYASAYTSDRINNGSAPPPPH. A compositionally biased stretch (polar residues) spans 22–32; that stretch reads AYTSDRINNGS.

This sequence belongs to the Mediator complex subunit 7 family. In terms of assembly, component of the Mediator complex. Interacts with mdt-10 and mdt-21. Interacts with RNA polymerase II.

It is found in the nucleus. Component of the Mediator complex, a coactivator involved in the regulated transcription of nearly all RNA polymerase II-dependent genes. Mediator functions as a bridge to convey information from gene-specific regulatory proteins to the basal RNA polymerase II transcription machinery. Mediator is recruited to promoters by direct interactions with regulatory proteins and serves as a scaffold for the assembly of a functional preinitiation complex with RNA polymerase II and the general transcription factors. Required for germ cell development and gonadal growth. This Caenorhabditis elegans protein is Mediator of RNA polymerase II transcription subunit 7 (let-49).